Consider the following 1701-residue polypeptide: Merozoite surface protein 1 (1701 aa).

Residues 1–19 (MKIIFFLCSFLFFIINTQC) form the signal peptide. Residues 89–100 (GSGGSVASGGSG) show a composition bias toward gly residues. The tract at residues 89–118 (GSGGSVASGGSGNSRRTNPSDNSSDSNTKT) is disordered. Over residues 101–116 (NSRRTNPSDNSSDSNT) the composition is skewed to low complexity. Residues asparagine 110 and asparagine 239 are each glycosylated (N-linked (GlcNAc...) asparagine). The disordered stretch occupies residues 322–344 (DAENPTTGSKPNPLPENKKKEVE). Residues asparagine 470, asparagine 536, and asparagine 607 are each glycosylated (N-linked (GlcNAc...) asparagine). A disordered region spans residues 704–739 (SETTEDGGHSTHTLSQSGETEVTEETEVTEETVGHT). The segment covering 724-733 (EVTEETEVTE) has biased composition (acidic residues). N-linked (GlcNAc...) asparagine glycosylation is found at asparagine 802, asparagine 899, asparagine 919, asparagine 965, asparagine 991, asparagine 1089, and asparagine 1196. Low complexity predominate over residues 889 to 927 (TGTSSTSSPGNTTVNTAQSATHSNSQNQQSNASSTNTQN). The disordered stretch occupies residues 889–936 (TGTSSTSSPGNTTVNTAQSATHSNSQNQQSNASSTNTQNGVAVSSGPA). 2 disordered regions span residues 1230–1259 (TPPQ…TQIP) and 1451–1472 (KEKF…DEQK). Positions 1245 to 1259 (VSGSSGSTKEETQIP) are enriched in polar residues. The segment covering 1456-1465 (SSPPTTPPSP) has biased composition (pro residues). The N-linked (GlcNAc...) asparagine glycan is linked to asparagine 1588. EGF-like domains lie at 1592-1632 (HQCV…VENP) and 1633-1680 (NPTC…IFCS). 6 disulfide bridges follow: cysteine 1594/cysteine 1605, cysteine 1599/cysteine 1615, cysteine 1617/cysteine 1628, cysteine 1636/cysteine 1649, cysteine 1643/cysteine 1663, and cysteine 1665/cysteine 1679. A lipid anchor (GPI-anchor amidated serine) is attached at serine 1680. Positions 1681–1701 (SSNFLGISFLLILMLILYSFI) are cleaved as a propeptide — removed in mature form.

As to quaternary structure, forms a complex composed of subunits p83, p30, p38, and p42 which remain non-covalently associated; the complex is formed at the merozoite surface prior to egress from host erythrocytes. Forms a complex composed of processed MSP1 subunits, MSP6 subunit p36 and MSP7; the complex is formed at the merozoite surface prior to egress from host erythrocytes. Within the complex, interacts (via subunit p38) with MSP6 subunit p36 and (via subunits p83, p30 and p38) with MSP7 (via subunit p22). Forms a complex composed of MSP1, MSP6, DBLMSP1 and DBLMSP2. Within the complex, interacts (via subunit p38) with DBLMSP1 and DBLMSP2. Forms a complex composed of MSP1, and rhoptry proteins RhopH3, RAP1 and CLAG9/RhopH3. Within the complex, interacts (via subunits p42 and p19) with RhopH3 (via C-terminus). Forms a complex composed of MSP1, MSP6, MSP7, MSP9 and MSP3; within the complex, MSP6 and MSP9 mediate the binding to the host erythrocyte. Interacts (via subunits p19 and p42) with MSP9; the interaction is direct; MSP1 subunits p19 or p42, and MSP9 form a co-ligand complex that interacts with host SLC4A1/Band 3 protein. May interact with PFD6. Interacts with host spectrin. In terms of assembly, interacts with host glycophorin GYPA in a sialic acid-independent manner. Interacts with host proinflammatory cytokine S100P; the interaction blocks S100P inflammatory and chemotactic activities. As to quaternary structure, interacts with host SLC4A1/Band 3 (via 5ABC region) on the host erythrocyte surface in a sialic acid-independent manner. In terms of processing, the p190 precursor is cleaved by SUB1 prior to merozoite egress into 4 subunits p83, p30, p38, and p42 which remain non-covalently associated. SUB1-mediated proteolytic cleavage occurs in an orderly manner; the first cleavage occurs at the p30/p38 site, followed by cleavage at the p83/p30 site, the last cleavage occurs at the p38/p42 site. The order of cleavage is essential for parasite viability. SUB1-mediated processing is essential for merozoite egress. In a second processing step during erythrocyte invasion, p42 is cleaved by SUB2 into p33 and p19; the latter remains attached to the merozoite surface via its GPI-anchor and is endocytosed during the subsequent ring stage.

The protein localises to the cell membrane. Its subcellular location is the secreted. It is found in the vacuole membrane. During the asexual blood stage, involved in merozoite egress from host erythrocytes possibly via its interaction with the host cytoskeleton protein spectrin resulting in the destabilization of the host cytoskeleton and thus leading to erythrocyte cell membrane rupture. Involved in the binding to host erythrocytes and is required for host erythrocyte invasion. Its function is as follows. By binding to host proinflammatory cytokine S100P may interfere with host immune responses. In terms of biological role, involved in merozoite invasion of host erythrocytes. May play a role in the biogenesis and/or function of the food vacuole during the intraerythrocytic development. This chain is Merozoite surface protein 1, found in Plasmodium falciparum (isolate mad20 / Papua New Guinea).